Here is a 445-residue protein sequence, read N- to C-terminus: Exodeoxyribonuclease 7 large subunit (445 aa).

This sequence belongs to the XseA family. As to quaternary structure, heterooligomer composed of large and small subunits.

It localises to the cytoplasm. It catalyses the reaction Exonucleolytic cleavage in either 5'- to 3'- or 3'- to 5'-direction to yield nucleoside 5'-phosphates.. Functionally, bidirectionally degrades single-stranded DNA into large acid-insoluble oligonucleotides, which are then degraded further into small acid-soluble oligonucleotides. In Staphylococcus aureus (strain bovine RF122 / ET3-1), this protein is Exodeoxyribonuclease 7 large subunit.